Reading from the N-terminus, the 901-residue chain is Protein translocase subunit SecA (901 aa).

ATP contacts are provided by residues glutamine 85, 103 to 107, and aspartate 510; that span reads GEGKT. A compositionally biased stretch (basic and acidic residues) spans 836 to 845; that stretch reads EEAERARQEM. Positions 836-901 are disordered; that stretch reads EEAERARQEM…HCHGSRVARQ (66 aa). Residues 849–866 show a composition bias toward polar residues; the sequence is INQNNLPVDENSQTTQNS. The Zn(2+) site is built by cysteine 882, cysteine 884, cysteine 893, and histidine 894. Positions 888 to 901 are enriched in basic residues; that stretch reads KKYKHCHGSRVARQ.

Belongs to the SecA family. In terms of assembly, monomer and homodimer. Part of the essential Sec protein translocation apparatus which comprises SecA, SecYEG and auxiliary proteins SecDF-YajC and YidC. Zn(2+) serves as cofactor.

It localises to the cell inner membrane. The protein resides in the cytoplasm. It catalyses the reaction ATP + H2O + cellular proteinSide 1 = ADP + phosphate + cellular proteinSide 2.. Its function is as follows. Part of the Sec protein translocase complex. Interacts with the SecYEG preprotein conducting channel. Has a central role in coupling the hydrolysis of ATP to the transfer of proteins into and across the cell membrane, serving both as a receptor for the preprotein-SecB complex and as an ATP-driven molecular motor driving the stepwise translocation of polypeptide chains across the membrane. The sequence is that of Protein translocase subunit SecA from Haemophilus influenzae (strain PittEE).